The following is a 220-amino-acid chain: Adenylate kinase (220 aa).

G10 to T15 is an ATP binding site. The NMP stretch occupies residues S30–I59. AMP-binding positions include S31, R36, D57 to I59, G83 to R86, and Q90. Residues G124–D161 form an LID region. R125 provides a ligand contact to ATP. The Zn(2+) site is built by C128 and C131. V134–Y135 contacts ATP. Residues C148 and C151 each contribute to the Zn(2+) site. Residues R158 and R169 each coordinate AMP. G197 is a binding site for ATP.

Belongs to the adenylate kinase family. Monomer.

The protein localises to the cytoplasm. It carries out the reaction AMP + ATP = 2 ADP. Its pathway is purine metabolism; AMP biosynthesis via salvage pathway; AMP from ADP: step 1/1. In terms of biological role, catalyzes the reversible transfer of the terminal phosphate group between ATP and AMP. Plays an important role in cellular energy homeostasis and in adenine nucleotide metabolism. The protein is Adenylate kinase of Pyrococcus furiosus (strain ATCC 43587 / DSM 3638 / JCM 8422 / Vc1).